The sequence spans 565 residues: Proline--tRNA ligase (565 aa).

The protein belongs to the class-II aminoacyl-tRNA synthetase family. ProS type 1 subfamily. In terms of assembly, homodimer.

It localises to the cytoplasm. It carries out the reaction tRNA(Pro) + L-proline + ATP = L-prolyl-tRNA(Pro) + AMP + diphosphate. Catalyzes the attachment of proline to tRNA(Pro) in a two-step reaction: proline is first activated by ATP to form Pro-AMP and then transferred to the acceptor end of tRNA(Pro). As ProRS can inadvertently accommodate and process non-cognate amino acids such as alanine and cysteine, to avoid such errors it has two additional distinct editing activities against alanine. One activity is designated as 'pretransfer' editing and involves the tRNA(Pro)-independent hydrolysis of activated Ala-AMP. The other activity is designated 'posttransfer' editing and involves deacylation of mischarged Ala-tRNA(Pro). The misacylated Cys-tRNA(Pro) is not edited by ProRS. The sequence is that of Proline--tRNA ligase from Lactobacillus gasseri (strain ATCC 33323 / DSM 20243 / BCRC 14619 / CIP 102991 / JCM 1131 / KCTC 3163 / NCIMB 11718 / NCTC 13722 / AM63).